The primary structure comprises 351 residues: RISC-loading complex subunit tarbp2 (351 aa).

A disordered region spans residues 1–22 (MSENGDCEHQTSSGFPSIEQML). DRBM domains lie at 29–96 (TPIS…LLKE) and 150–218 (NPVG…QIHQ). A disordered region spans residues 221–243 (AEHRESGETEPEEDQFSVGKLDG). Residues 278–346 (GFCSLLQDLS…AHNALQYLKI (69 aa)) form the DRBM 3 domain.

It belongs to the TARBP2 family. In terms of assembly, self-associates. Component of the RISC loading complex (RLC), or micro-RNA (miRNA) loading complex (miRLC), which is composed of dicer1, ago2 and tarbp2. Note that the trimeric RLC/miRLC is also referred to as RISC.

The protein localises to the cytoplasm. Its function is as follows. Required for formation of the RNA induced silencing complex (RISC). Component of the RISC loading complex (RLC), also known as the micro-RNA (miRNA) loading complex (miRLC), which is composed of dicer1, ago2 and tarbp2. Within the RLC/miRLC, dicer1 and tarbp2 are required to process precursor miRNAs (pre-miRNAs) to mature miRNAs and then load them onto ago2. ago2 bound to the mature miRNA constitutes the minimal RISC and may subsequently dissociate from dicer1 and tarbp2. May also play a role in the production of short interfering RNAs (siRNAs) from double-stranded RNA (dsRNA) by dicer1. This is RISC-loading complex subunit tarbp2 (tarbp2) from Xenopus laevis (African clawed frog).